A 329-amino-acid polypeptide reads, in one-letter code: Transmembrane protein I329L (329 aa).

The first 31 residues, 1 to 31 (MLRVFIFFVFLGSGLTGRIKPQVTCKYFISE), serve as a signal peptide directing secretion. 6 N-linked (GlcNAc...) asparagine; by host glycosylation sites follow: Asn-32, Asn-39, Asn-44, Asn-76, Asn-82, and Asn-101. The Extracellular portion of the chain corresponds to 32–239 (NNTWYKYNVT…NTERYKSCYP (208 aa)). Residues 112 to 133 (ELKFLDLRYNDLQVIDYNILRK) form an LRR repeat. 2 N-linked (GlcNAc...) asparagine; by host glycosylation sites follow: Asn-185 and Asn-219. Residues Cys-195 and Cys-237 are joined by a disulfide bond. A helical membrane pass occupies residues 240 to 260 (LVFISILCSCISFLFLFICLL). The Cytoplasmic portion of the chain corresponds to 261 to 329 (RSICKKYSCT…EKKVSCSRRK (69 aa)).

Belongs to the asfivirus I329L family. Highly glycosylated.

It is found in the host endoplasmic reticulum membrane. The protein resides in the host Golgi apparatus membrane. Its function is as follows. Viral TLR3 homolog that probably prevents TLR3 dimerization and subsequent induction of IFN. Inhibits dsRNA-stimulated activation of NF-kB and IRF3. The chain is Transmembrane protein I329L from Ornithodoros (relapsing fever ticks).